We begin with the raw amino-acid sequence, 341 residues long: UDP-N-acetylenolpyruvoylglucosamine reductase (341 aa).

The FAD-binding PCMH-type domain maps to 15 to 185 (VTQSCLSLIE…TAVGLRLPKT (171 aa)). Residue R161 is part of the active site. The Proton donor role is filled by S231. Residue E327 is part of the active site.

It belongs to the MurB family. FAD serves as cofactor.

The protein localises to the cytoplasm. The catalysed reaction is UDP-N-acetyl-alpha-D-muramate + NADP(+) = UDP-N-acetyl-3-O-(1-carboxyvinyl)-alpha-D-glucosamine + NADPH + H(+). The protein operates within cell wall biogenesis; peptidoglycan biosynthesis. Its function is as follows. Cell wall formation. This chain is UDP-N-acetylenolpyruvoylglucosamine reductase, found in Shewanella oneidensis (strain ATCC 700550 / JCM 31522 / CIP 106686 / LMG 19005 / NCIMB 14063 / MR-1).